Here is a 335-residue protein sequence, read N- to C-terminus: MLNEAIKEVLSGKDLSESQSEQVMENIMNGQESSALIAGFLIALKMKGESIPEITGCAKAMRNMAVPVKLKSQYAIDTCGTGGDGGRTFNISTAAAIIAASAGVKVAKHGNRAVSSQSGSADVLKELGININLEKSKVEHCIDNVGMGFLFAPSYHSAMKNVAGIRRDLGVRTIFNILGPLTNPAFVKGQVMGVYDRKLLEPAAKTLLNLGCERAMVVHGGDGLDEITTTTVTYVCEVKDGEIRKYTLSPGDFGIKTTFYKNIAGGTARENAAIIMDILKGKTGPERDIVVLNSAAAIYIGKKAEDLKEGILRANELIDSGKAYAKYEEILNYNN.

5-phospho-alpha-D-ribose 1-diphosphate is bound by residues Gly-80, 83 to 84 (GD), Thr-88, 90 to 93 (NIST), 108 to 116 (KHGNRAVSS), and Ser-120. Residue Gly-80 participates in anthranilate binding. Residue Ser-92 coordinates Mg(2+). Asn-111 is an anthranilate binding site. An anthranilate-binding site is contributed by Arg-166. The Mg(2+) site is built by Asp-225 and Glu-226.

This sequence belongs to the anthranilate phosphoribosyltransferase family. As to quaternary structure, homodimer. It depends on Mg(2+) as a cofactor.

It catalyses the reaction N-(5-phospho-beta-D-ribosyl)anthranilate + diphosphate = 5-phospho-alpha-D-ribose 1-diphosphate + anthranilate. It functions in the pathway amino-acid biosynthesis; L-tryptophan biosynthesis; L-tryptophan from chorismate: step 2/5. Catalyzes the transfer of the phosphoribosyl group of 5-phosphorylribose-1-pyrophosphate (PRPP) to anthranilate to yield N-(5'-phosphoribosyl)-anthranilate (PRA). This Clostridium kluyveri (strain NBRC 12016) protein is Anthranilate phosphoribosyltransferase.